Consider the following 50-residue polypeptide: Large ribosomal subunit protein bL33 (50 aa).

The protein belongs to the bacterial ribosomal protein bL33 family.

The polypeptide is Large ribosomal subunit protein bL33 (Hydrogenovibrio crunogenus (strain DSM 25203 / XCL-2) (Thiomicrospira crunogena)).